We begin with the raw amino-acid sequence, 401 residues long: Aspartate aminotransferase, mitochondrial (401 aa).

A Phosphothreonine modification is found at threonine 19. Residue lysine 30 is modified to N6-acetyllysine. Position 36 (glycine 36) interacts with substrate. Lysine 44 carries the N6-acetyllysine; alternate modification. Lysine 44 is subject to N6-succinyllysine; alternate. An N6-acetyllysine modification is found at lysine 53. Lysine 61 is modified (N6-acetyllysine; alternate). Position 61 is an N6-succinyllysine; alternate (lysine 61). Tyrosine 67 is subject to 3'-nitrotyrosine; alternate. A Phosphotyrosine; alternate modification is found at tyrosine 67. 3 positions are modified to N6-acetyllysine; alternate: lysine 78, lysine 93, and lysine 130. N6-succinyllysine; alternate occurs at positions 78, 93, and 130. Tryptophan 133 lines the substrate pocket. Lysine 156 is modified (N6-acetyllysine; alternate). Lysine 156 carries the post-translational modification N6-succinyllysine; alternate. Residue asparagine 186 coordinates substrate. Residue lysine 198 is modified to N6-succinyllysine. Lysine 205 is subject to N6-acetyllysine. N6-acetyllysine; alternate occurs at positions 250 and 267. Lysine 250 is modified (N6-(pyridoxal phosphate)lysine; alternate). Residue lysine 267 is modified to N6-succinyllysine; alternate. Position 273 is an N6-acetyllysine (lysine 273). Lysine 280 carries the N6-acetyllysine; alternate modification. Lysine 280 is modified (N6-succinyllysine; alternate). Asymmetric dimethylarginine is present on arginine 284. An N6-acetyllysine; alternate modification is found at lysine 309. Lysine 309 bears the N6-succinyllysine; alternate mark. The residue at position 316 (lysine 316) is an N6-acetyllysine. Residue lysine 334 is modified to N6-acetyllysine; alternate. Residue lysine 334 is modified to N6-succinyllysine; alternate. Residues lysine 335 and lysine 358 each carry the N6-acetyllysine modification. Residues lysine 367 and lysine 375 each carry the N6-acetyllysine; alternate modification. N6-succinyllysine; alternate is present on residues lysine 367 and lysine 375. Arginine 378 is a binding site for substrate.

This sequence belongs to the class-I pyridoxal-phosphate-dependent aminotransferase family. In terms of assembly, homodimer. It depends on pyridoxal 5'-phosphate as a cofactor.

The protein resides in the mitochondrion matrix. It localises to the cell membrane. The enzyme catalyses L-aspartate + 2-oxoglutarate = oxaloacetate + L-glutamate. It carries out the reaction L-kynurenine + 2-oxoglutarate = kynurenate + L-glutamate + H2O. In terms of biological role, catalyzes the irreversible transamination of the L-tryptophan metabolite L-kynurenine to form kynurenic acid (KA). As a member of the malate-aspartate shuttle, it has a key role in the intracellular NAD(H) redox balance. Is important for metabolite exchange between mitochondria and cytosol, and for amino acid metabolism. Facilitates cellular uptake of long-chain free fatty acids. In Equus caballus (Horse), this protein is Aspartate aminotransferase, mitochondrial (GOT2).